Reading from the N-terminus, the 450-residue chain is Tubulin alpha-1 chain (450 aa).

GTP is bound by residues Q11, E71, G144, T145, T179, N206, and N228. E71 contacts Mg(2+). The active site involves E254. T349 is subject to Phosphothreonine. The disordered stretch occupies residues 431–450 (DYEEVGGEGAEDDDEEGDEY).

It belongs to the tubulin family. In terms of assembly, dimer of alpha and beta chains. A typical microtubule is a hollow water-filled tube with an outer diameter of 25 nm and an inner diameter of 15 nM. Alpha-beta heterodimers associate head-to-tail to form protofilaments running lengthwise along the microtubule wall with the beta-tubulin subunit facing the microtubule plus end conferring a structural polarity. Microtubules usually have 13 protofilaments but different protofilament numbers can be found in some organisms and specialized cells. Mg(2+) is required as a cofactor. Post-translationally, undergoes a tyrosination/detyrosination cycle, the cyclic removal and re-addition of a C-terminal tyrosine residue by the enzymes tubulin tyrosine carboxypeptidase (TTCP) and tubulin tyrosine ligase (TTL), respectively.

It is found in the cytoplasm. The protein localises to the cytoskeleton. It catalyses the reaction GTP + H2O = GDP + phosphate + H(+). In terms of biological role, tubulin is the major constituent of microtubules, a cylinder consisting of laterally associated linear protofilaments composed of alpha- and beta-tubulin heterodimers. Microtubules grow by the addition of GTP-tubulin dimers to the microtubule end, where a stabilizing cap forms. Below the cap, tubulin dimers are in GDP-bound state, owing to GTPase activity of alpha-tubulin. This is Tubulin alpha-1 chain (TUBA1) from Arabidopsis thaliana (Mouse-ear cress).